A 309-amino-acid chain; its full sequence is Protease HtpX homolog (309 aa).

Helical transmembrane passes span 7-27 (AILL…IGGA) and 28-48 (SGAM…YWNS). H130 is a Zn(2+) binding site. The active site involves E131. Position 134 (H134) interacts with Zn(2+). 2 helical membrane-spanning segments follow: residues 145 to 165 (VTAT…FFGG) and 173 to 193 (GLGV…AMLV). E202 is a Zn(2+) binding site.

Belongs to the peptidase M48B family. It depends on Zn(2+) as a cofactor.

It localises to the cell inner membrane. The sequence is that of Protease HtpX homolog from Rhodopseudomonas palustris (strain BisA53).